A 64-amino-acid polypeptide reads, in one-letter code: Large ribosomal subunit protein bL35 (64 aa).

This sequence belongs to the bacterial ribosomal protein bL35 family.

The protein is Large ribosomal subunit protein bL35 of Streptomyces avermitilis (strain ATCC 31267 / DSM 46492 / JCM 5070 / NBRC 14893 / NCIMB 12804 / NRRL 8165 / MA-4680).